A 422-amino-acid chain; its full sequence is Ribosomal RNA small subunit methyltransferase B (422 aa).

S-adenosyl-L-methionine is bound by residues 254–260, Asp-277, Asp-303, and Asp-322; that span reads CAAPGGK. Cys-375 serves as the catalytic Nucleophile.

The protein belongs to the class I-like SAM-binding methyltransferase superfamily. RsmB/NOP family.

Its subcellular location is the cytoplasm. It carries out the reaction cytidine(967) in 16S rRNA + S-adenosyl-L-methionine = 5-methylcytidine(967) in 16S rRNA + S-adenosyl-L-homocysteine + H(+). Functionally, specifically methylates the cytosine at position 967 (m5C967) of 16S rRNA. This Proteus mirabilis (strain HI4320) protein is Ribosomal RNA small subunit methyltransferase B.